Reading from the N-terminus, the 272-residue chain is Undecaprenyl-diphosphatase (272 aa).

7 consecutive transmembrane segments (helical) span residues 2-22 (FDII…FLPI), 43-63 (FINM…ILLY), 82-102 (WQLW…GLPL), 110-130 (LHTP…FIIL), 185-205 (YVAT…VSIL), 224-244 (VLMT…KWLL), and 252-272 (FKPF…VMFI).

It belongs to the UppP family.

The protein localises to the cell membrane. The enzyme catalyses di-trans,octa-cis-undecaprenyl diphosphate + H2O = di-trans,octa-cis-undecaprenyl phosphate + phosphate + H(+). Catalyzes the dephosphorylation of undecaprenyl diphosphate (UPP). Confers resistance to bacitracin. The protein is Undecaprenyl-diphosphatase of Lacticaseibacillus paracasei (strain ATCC 334 / BCRC 17002 / CCUG 31169 / CIP 107868 / KCTC 3260 / NRRL B-441) (Lactobacillus paracasei).